Reading from the N-terminus, the 530-residue chain is Phosphoenolpyruvate carboxykinase (ATP) (530 aa).

3 residues coordinate substrate: R59, Y198, and K204. Residues K204, H223, and 239–247 (GLSGTGKTT) contribute to the ATP site. Residues K204 and H223 each coordinate Mn(2+). D260 serves as a coordination point for Mn(2+). Residues E288, R325, 440–441 (RI), and T446 each bind ATP. Position 325 (R325) interacts with substrate.

The protein belongs to the phosphoenolpyruvate carboxykinase (ATP) family. The cofactor is Mn(2+).

The protein localises to the cytoplasm. The catalysed reaction is oxaloacetate + ATP = phosphoenolpyruvate + ADP + CO2. It functions in the pathway carbohydrate biosynthesis; gluconeogenesis. In terms of biological role, involved in the gluconeogenesis. Catalyzes the conversion of oxaloacetate (OAA) to phosphoenolpyruvate (PEP) through direct phosphoryl transfer between the nucleoside triphosphate and OAA. This chain is Phosphoenolpyruvate carboxykinase (ATP), found in Azobacteroides pseudotrichonymphae genomovar. CFP2.